Consider the following 321-residue polypeptide: Beta-1,3-N-acetylglucosaminyltransferase manic fringe (321 aa).

The Cytoplasmic portion of the chain corresponds to 1 to 7; sequence MQCRLPR. Residues 8 to 27 traverse the membrane as a helical; Signal-anchor for type II membrane protein segment; the sequence is GLAGALLTLLCMGLLCLRYH. The Lumenal portion of the chain corresponds to 28–321; the sequence is LNLSPQRVQE…TPWCPQLGAR (294 aa). Substrate is bound at residue Arg-70. Asn-109 carries N-linked (GlcNAc...) asparagine glycosylation. Intrachain disulfides connect Cys-110–Cys-121 and Cys-139–Cys-202. Substrate is bound at residue Asp-143. Residue Asp-144 participates in Mn(2+) binding. An N-linked (GlcNAc...) asparagine glycan is attached at Asn-185. The active site involves Asp-232. Residue His-256 coordinates Mn(2+). Cys-306 and Cys-315 are oxidised to a cystine.

This sequence belongs to the glycosyltransferase 31 family. It depends on Mn(2+) as a cofactor.

It is found in the golgi apparatus membrane. It carries out the reaction 3-O-(alpha-L-fucosyl)-L-threonyl-[EGF-like domain protein] + UDP-N-acetyl-alpha-D-glucosamine = 3-O-(N-acetyl-beta-D-glucosaminyl-(1-&gt;3)-alpha-L-fucosyl)-L-threonyl-[EGF-like domain protein] + UDP + H(+). The catalysed reaction is 3-O-(alpha-L-fucosyl)-L-seryl-[EGF-like domain protein] + UDP-N-acetyl-alpha-D-glucosamine = 3-O-(N-acetyl-beta-D-glucosaminyl-(1-&gt;3)-alpha-L-fucosyl)-L-seryl-[EGF-like domain protein] + UDP + H(+). Its function is as follows. Glycosyltransferase that initiates the elongation of O-linked fucose residues attached to EGF-like repeats in the extracellular domain of Notch molecules. Modulates NOTCH1 activity by modifying O-fucose residues at specific EGF-like domains resulting in inhibition of NOTCH1 activation by JAG1 and enhancement of NOTCH1 activation by DLL1 via an increase in its binding to DLL1. The polypeptide is Beta-1,3-N-acetylglucosaminyltransferase manic fringe (MFNG) (Pan troglodytes (Chimpanzee)).